The following is a 240-amino-acid chain: UDP-2,3-diacylglucosamine hydrolase (240 aa).

Asp-8, His-10, Asp-41, Asn-79, and His-114 together coordinate Mn(2+). 79–80 contacts substrate; that stretch reads NR. Substrate is bound by residues Asp-122, Ser-160, Asn-164, Lys-167, and His-195. 2 residues coordinate Mn(2+): His-195 and His-197.

The protein belongs to the LpxH family. It depends on Mn(2+) as a cofactor.

The protein localises to the cell inner membrane. The catalysed reaction is UDP-2-N,3-O-bis[(3R)-3-hydroxytetradecanoyl]-alpha-D-glucosamine + H2O = 2-N,3-O-bis[(3R)-3-hydroxytetradecanoyl]-alpha-D-glucosaminyl 1-phosphate + UMP + 2 H(+). Its pathway is glycolipid biosynthesis; lipid IV(A) biosynthesis; lipid IV(A) from (3R)-3-hydroxytetradecanoyl-[acyl-carrier-protein] and UDP-N-acetyl-alpha-D-glucosamine: step 4/6. In terms of biological role, hydrolyzes the pyrophosphate bond of UDP-2,3-diacylglucosamine to yield 2,3-diacylglucosamine 1-phosphate (lipid X) and UMP by catalyzing the attack of water at the alpha-P atom. Involved in the biosynthesis of lipid A, a phosphorylated glycolipid that anchors the lipopolysaccharide to the outer membrane of the cell. The chain is UDP-2,3-diacylglucosamine hydrolase from Cellvibrio japonicus (strain Ueda107) (Pseudomonas fluorescens subsp. cellulosa).